The chain runs to 243 residues: DNA repair protein RecO (243 aa).

It belongs to the RecO family.

Its function is as follows. Involved in DNA repair and RecF pathway recombination. This chain is DNA repair protein RecO, found in Caulobacter vibrioides (strain NA1000 / CB15N) (Caulobacter crescentus).